Consider the following 592-residue polypeptide: LIM domain-binding protein 1 (592 aa).

Disordered stretches follow at residues 14–41 (GHPPPFAGPESSNSHYGMPPSQGTNSQN) and 305–368 (PAPE…NPMT). The segment covering 23-41 (ESSNSHYGMPPSQGTNSQN) has biased composition (polar residues). Positions 322–344 (PAANPRGSKKATAAAAAAAAAAT) are enriched in low complexity. Polar residues predominate over residues 352 to 368 (PTASPANNQQFPPNPMT). An LIM interaction domain (LID) domain is found at 378-417 (DVMVVGEPSMMGSEFGENDERTISRVENSQYDPNAMQMQS). 2 disordered regions span residues 437–458 (HHPGMQPPPGQQHMPPHSMGSQ) and 559–592 (GGMQMNQMPPPNYSQYTGGPPPQWPPPNSAMITG). Positions 577–586 (GPPPQWPPPN) are enriched in pro residues.

Belongs to the LDB family. In terms of assembly, interacts with blmp-1. Expressed in all neurons and some other tissues of the adult, including vulval muscle, and, in males, all the neurons of the tail region. Expressed in vulval cells.

In terms of biological role, binds to the LIM domain of LIM domain-containing transcription factors. Required for the blmp-1-mediated transcriptional activation or repression of several hypodermal genes, such as bed-3. Regulates sam-10 nuclear localization in PLM neurons. Has a role in synaptic differentiation of PLM mechanosensory neurons. Involved in gonadogenesis. The chain is LIM domain-binding protein 1 from Caenorhabditis elegans.